Reading from the N-terminus, the 295-residue chain is Ankyrin repeat and SOCS box protein 17 (295 aa).

An ANK repeat occupies 146 to 176 (SGITPLFYVAQTRQSNIFKILLQYGILEREK). The 64-residue stretch at 232-295 (LGRHPIISNW…RLQNYLNLEI (64 aa)) folds into the SOCS box domain.

Belongs to the ankyrin SOCS box (ASB) family. In terms of tissue distribution, specifically expressed in testis. Not detected in other tissues tested.

It functions in the pathway protein modification; protein ubiquitination. Functionally, may be a substrate-recognition component of a SCF-like ECS (Elongin-Cullin-SOCS-box protein) E3 ubiquitin-protein ligase complex which mediates the ubiquitination and subsequent proteasomal degradation of target proteins. The protein is Ankyrin repeat and SOCS box protein 17 (ASB17) of Homo sapiens (Human).